Here is a 761-residue protein sequence, read N- to C-terminus: Elongation factor G, mitochondrial (761 aa).

A mitochondrion-targeting transit peptide spans 1–42 (MSVQKMMWVPRKMVGGRIPFFTCSKVFSGFSRRSFHESPLAR). Residues 68–349 (NKLRNIGISA…AIVDYLPNPS (282 aa)) form the tr-type G domain. Residues 77-84 (AHIDSGKT), 148-152 (DTPGH), and 202-205 (NKMD) contribute to the GTP site.

This sequence belongs to the TRAFAC class translation factor GTPase superfamily. Classic translation factor GTPase family. EF-G/EF-2 subfamily. Post-translationally, the precursor is processed in two steps involving mitochondrial intermediate peptidase (MIP) and mitochondrial processing peptidase (MPP).

Its subcellular location is the mitochondrion. Its pathway is protein biosynthesis; polypeptide chain elongation. In terms of biological role, mitochondrial GTPase that catalyzes the GTP-dependent ribosomal translocation step during translation elongation. During this step, the ribosome changes from the pre-translocational (PRE) to the post-translocational (POST) state as the newly formed A-site-bound peptidyl-tRNA and P-site-bound deacylated tRNA move to the P and E sites, respectively. Catalyzes the coordinated movement of the two tRNA molecules, the mRNA and conformational changes in the ribosome. The protein is Elongation factor G, mitochondrial of Saccharomyces cerevisiae (strain ATCC 204508 / S288c) (Baker's yeast).